We begin with the raw amino-acid sequence, 132 residues long: MIAKTVAVLALAGSAAAYAPTMSLSANRRELVQGAAAAAVVAPLLRPTGASARDAQLRAPIVEIFDARGCDAKNAQYTGPKSNDMNDDQCVKVSMQKITVSEATAAKKLQEFIGGKATAINVPIISSMTKKY.

Positions 54 and 68 each coordinate (2R,3E)-phycocyanobilin. Residues C70, Q76, Y77, and K92 each coordinate mesobiliverdin. Residues P123 and I125 each coordinate 15,16-dihydrobiliverdin.

This sequence belongs to the phycoerythrin family. In terms of assembly, heterotetramer of 2 different alpha chains and 2 identical beta chains which form 2 alpha-beta heterodimers within the heterotetramer. Contains two phycocyanobilin chromophores, one mesobiliverdin chromophore and one 15,16-dihydrobiliverdin chromophore with binding mediated by both the alpha and beta subunits.

The protein localises to the plastid. Its subcellular location is the chloroplast thylakoid membrane. Its function is as follows. Light-harvesting photosynthetic tetrapyrrole chromophore-protein from the phycobiliprotein complex. The polypeptide is Phycocyanin PC645 alpha-1 subunit (Chroomonas sp. (strain CCMP270)).